A 451-amino-acid chain; its full sequence is AP-3 complex subunit mu (451 aa).

Residues 191–450 (NNEIYVDLVE…TSRAGDYIVR (260 aa)) enclose the MHD domain.

It belongs to the adaptor complexes medium subunit family. As to quaternary structure, adaptor protein complex 3 (AP-3) is a heterotetramer composed of 2 large adaptins (APL5 and APL6), a medium adaptin (APM3) and a small adaptin (APS3).

Its subcellular location is the golgi apparatus. The protein resides in the cytoplasmic vesicle membrane. In terms of biological role, part of the AP-3 complex, an adaptor-related complex which is not clathrin-associated. The complex is associated with the Golgi region as well as more peripheral structures. It facilitates the budding of vesicles from the Golgi membrane and may be directly involved in trafficking to the vacuole. In Eremothecium gossypii (strain ATCC 10895 / CBS 109.51 / FGSC 9923 / NRRL Y-1056) (Yeast), this protein is AP-3 complex subunit mu (APM3).